The chain runs to 196 residues: Holliday junction branch migration complex subunit RuvA (196 aa).

Positions 1–64 (MIDRLRGQLV…EDAMLLFGFA (64 aa)) are domain I. Residues 65–143 (TREEREAFDA…AAAGGGGGVA (79 aa)) form a domain II region. Residues 144-153 (AGEGDGPFME) form a flexible linker region. The interval 153–196 (EAREALTGLGYSLEEAERALRDVPPQETVEQYIKAALRKIGGRR) is domain III.

Belongs to the RuvA family. In terms of assembly, homotetramer. Forms an RuvA(8)-RuvB(12)-Holliday junction (HJ) complex. HJ DNA is sandwiched between 2 RuvA tetramers; dsDNA enters through RuvA and exits via RuvB. An RuvB hexamer assembles on each DNA strand where it exits the tetramer. Each RuvB hexamer is contacted by two RuvA subunits (via domain III) on 2 adjacent RuvB subunits; this complex drives branch migration. In the full resolvosome a probable DNA-RuvA(4)-RuvB(12)-RuvC(2) complex forms which resolves the HJ.

It localises to the cytoplasm. The RuvA-RuvB-RuvC complex processes Holliday junction (HJ) DNA during genetic recombination and DNA repair, while the RuvA-RuvB complex plays an important role in the rescue of blocked DNA replication forks via replication fork reversal (RFR). RuvA specifically binds to HJ cruciform DNA, conferring on it an open structure. The RuvB hexamer acts as an ATP-dependent pump, pulling dsDNA into and through the RuvAB complex. HJ branch migration allows RuvC to scan DNA until it finds its consensus sequence, where it cleaves and resolves the cruciform DNA. The chain is Holliday junction branch migration complex subunit RuvA from Rubrobacter xylanophilus (strain DSM 9941 / JCM 11954 / NBRC 16129 / PRD-1).